A 256-amino-acid chain; its full sequence is Imidazole glycerol phosphate synthase subunit HisF (256 aa).

Catalysis depends on residues Asp-12 and Asp-131.

It belongs to the HisA/HisF family. In terms of assembly, heterodimer of HisH and HisF.

Its subcellular location is the cytoplasm. It carries out the reaction 5-[(5-phospho-1-deoxy-D-ribulos-1-ylimino)methylamino]-1-(5-phospho-beta-D-ribosyl)imidazole-4-carboxamide + L-glutamine = D-erythro-1-(imidazol-4-yl)glycerol 3-phosphate + 5-amino-1-(5-phospho-beta-D-ribosyl)imidazole-4-carboxamide + L-glutamate + H(+). It participates in amino-acid biosynthesis; L-histidine biosynthesis; L-histidine from 5-phospho-alpha-D-ribose 1-diphosphate: step 5/9. In terms of biological role, IGPS catalyzes the conversion of PRFAR and glutamine to IGP, AICAR and glutamate. The HisF subunit catalyzes the cyclization activity that produces IGP and AICAR from PRFAR using the ammonia provided by the HisH subunit. The chain is Imidazole glycerol phosphate synthase subunit HisF from Thermobifida fusca (strain YX).